The chain runs to 128 residues: Glycine cleavage system H protein (128 aa).

Residues V24–R106 enclose the Lipoyl-binding domain. Position 65 is an N6-lipoyllysine (K65).

The protein belongs to the GcvH family. In terms of assembly, the glycine cleavage system is composed of four proteins: P, T, L and H. Requires (R)-lipoate as cofactor.

Functionally, the glycine cleavage system catalyzes the degradation of glycine. The H protein shuttles the methylamine group of glycine from the P protein to the T protein. The chain is Glycine cleavage system H protein from Edwardsiella ictaluri (strain 93-146).